We begin with the raw amino-acid sequence, 212 residues long: Putative tyrosine-protein phosphatase R622 (212 aa).

In terms of domain architecture, Tyrosine-protein phosphatase spans 9–191 (KISQVTNNIF…LQGYQSKKEN (183 aa)). Catalysis depends on C135, which acts as the Phosphocysteine intermediate.

It belongs to the protein-tyrosine phosphatase family. Non-receptor class dual specificity subfamily.

It carries out the reaction O-phospho-L-tyrosyl-[protein] + H2O = L-tyrosyl-[protein] + phosphate. In Acanthamoeba polyphaga mimivirus (APMV), this protein is Putative tyrosine-protein phosphatase R622.